We begin with the raw amino-acid sequence, 401 residues long: Acetate kinase (401 aa).

Mg(2+) is bound at residue N7. K14 is an ATP binding site. Residue R92 participates in substrate binding. The active-site Proton donor/acceptor is D149. Residues 209 to 213, 283 to 285, and 331 to 335 contribute to the ATP site; these read HLGNG, DAR, and GLGEN. Residue E385 participates in Mg(2+) binding.

This sequence belongs to the acetokinase family. As to quaternary structure, homodimer. Requires Mg(2+) as cofactor. Mn(2+) is required as a cofactor.

Its subcellular location is the cytoplasm. The catalysed reaction is acetate + ATP = acetyl phosphate + ADP. The protein operates within metabolic intermediate biosynthesis; acetyl-CoA biosynthesis; acetyl-CoA from acetate: step 1/2. In terms of biological role, catalyzes the formation of acetyl phosphate from acetate and ATP. Can also catalyze the reverse reaction. This is Acetate kinase from Helicobacter pylori (strain Shi470).